Here is a 1121-residue protein sequence, read N- to C-terminus: PR domain zinc finger protein 10 (1121 aa).

Disordered stretches follow at residues 1-24 (MEAK…NTPQ) and 92-125 (TEAS…MDDW). A compositionally biased stretch (acidic residues) spans 106–124 (VDSEDEEEDNDSEDSEMDD). The SET domain maps to 173–290 (LPLVLYIDRF…PKQELKVWYA (118 aa)). The N-terminal PR domain; essential for transcriptional activation stretch occupies residues 192–295 (IPKRTQFGPL…KVWYAASYAE (104 aa)). The segment at 319–341 (WPCYECNRRFMSSEQLQQHLNMH) adopts a C2H2-type 1 zinc-finger fold. 2 disordered regions span residues 350–387 (RPKS…SADK) and 419–473 (ESME…PHLT). Over residues 351 to 374 (PKSRGRGRGRKRFGGARRPGRRTK) the composition is skewed to basic residues. 9 consecutive C2H2-type zinc fingers follow at residues 500-522 (FKCP…MRFH), 529-551 (HVCH…LVLH), 557-579 (YSCL…VGIH), 585-608 (FLCP…RSFH), 613-635 (FQCS…MLRH), 641-664 (FLCS…QRMH), 696-719 (FKCR…SKRH), 741-764 (YYCQ…LKNH), and 803-826 (VCCP…RKKH). A C-terminal glutamine-rich region; essential for transcriptional activation region spans residues 871-1101 (QAMTELSQTL…PAGGQQATTQ (231 aa)). Residues 1077–1097 (VPSTATQGHPDPLEQPAGGQQ) form a disordered region.

Belongs to the class V-like SAM-binding methyltransferase superfamily.

It is found in the nucleus. Its function is as follows. Transcriptional activator, essential for early embryonic development and survival of embryonic stem cells (ESCs). Supports cell growth and survival during early development by transcriptionally activating the expression of the translation initiation factor EIF3B, to sustain global translation. Activates the transcription of FLNC. The chain is PR domain zinc finger protein 10 (prdm10) from Danio rerio (Zebrafish).